A 339-amino-acid polypeptide reads, in one-letter code: Phenylalanine--tRNA ligase alpha subunit (339 aa).

A Mg(2+)-binding site is contributed by Glu-254.

Belongs to the class-II aminoacyl-tRNA synthetase family. Phe-tRNA synthetase alpha subunit type 1 subfamily. In terms of assembly, tetramer of two alpha and two beta subunits. It depends on Mg(2+) as a cofactor.

The protein resides in the cytoplasm. It catalyses the reaction tRNA(Phe) + L-phenylalanine + ATP = L-phenylalanyl-tRNA(Phe) + AMP + diphosphate + H(+). The chain is Phenylalanine--tRNA ligase alpha subunit from Clostridium botulinum (strain Langeland / NCTC 10281 / Type F).